A 675-amino-acid chain; its full sequence is L-type lectin-domain containing receptor kinase IV.1 (675 aa).

The N-terminal stretch at 1–22 (MFLKLLTIFFFFFFNLIFQSSS) is a signal peptide. At 23-291 (QSLNFAYNNG…EPKRISEFYK (269 aa)) the chain is on the extracellular side. The tract at residues 25-261 (LNFAYNNGFN…SEHYILGWSF (237 aa)) is legume-lectin like. N-linked (GlcNAc...) asparagine glycosylation is found at N57, N79, N112, N134, N153, and N186. The helical transmembrane segment at 292–312 (IGMPLISLFLIFSFIFLVCYI) threads the bilayer. Residues 313–675 (VRRRRKFAEE…IADSQLSGGR (363 aa)) are Cytoplasmic-facing. The Protein kinase domain occupies 347–624 (FKEKGLLGTG…LHYLRGDAKL (278 aa)). ATP contacts are provided by residues 353–361 (LGTGGFGSV) and K376. Catalysis depends on D472, which acts as the Proton acceptor.

It in the C-terminal section; belongs to the protein kinase superfamily. Ser/Thr protein kinase family. This sequence in the N-terminal section; belongs to the leguminous lectin family.

The protein resides in the membrane. It catalyses the reaction L-seryl-[protein] + ATP = O-phospho-L-seryl-[protein] + ADP + H(+). It carries out the reaction L-threonyl-[protein] + ATP = O-phospho-L-threonyl-[protein] + ADP + H(+). This chain is L-type lectin-domain containing receptor kinase IV.1 (LECRK41), found in Arabidopsis thaliana (Mouse-ear cress).